A 363-amino-acid chain; its full sequence is 3-dehydroquinate synthase (363 aa).

Residues 75-80 (DAEEGK), 109-113 (GAVTD), 133-134 (TS), lysine 146, lysine 155, and 173-176 (TLDT) contribute to the NAD(+) site. Glutamate 188, histidine 251, and histidine 267 together coordinate Zn(2+).

The protein belongs to the sugar phosphate cyclases superfamily. Dehydroquinate synthase family. It depends on Co(2+) as a cofactor. The cofactor is Zn(2+). NAD(+) serves as cofactor.

It is found in the cytoplasm. The catalysed reaction is 7-phospho-2-dehydro-3-deoxy-D-arabino-heptonate = 3-dehydroquinate + phosphate. It functions in the pathway metabolic intermediate biosynthesis; chorismate biosynthesis; chorismate from D-erythrose 4-phosphate and phosphoenolpyruvate: step 2/7. Functionally, catalyzes the conversion of 3-deoxy-D-arabino-heptulosonate 7-phosphate (DAHP) to dehydroquinate (DHQ). The polypeptide is 3-dehydroquinate synthase (Pseudarthrobacter chlorophenolicus (strain ATCC 700700 / DSM 12829 / CIP 107037 / JCM 12360 / KCTC 9906 / NCIMB 13794 / A6) (Arthrobacter chlorophenolicus)).